The chain runs to 505 residues: GDP-Man:Man(3)GlcNAc(2)-PP-Dol alpha-1,2-mannosyltransferase (505 aa).

Topologically, residues 1 to 4 are lumenal; that stretch reads MSTM. Residues 5–25 form a helical membrane-spanning segment; sequence LWVVVAAVLLFVLPVVRVPML. Residues 26–130 are Cytoplasmic-facing; it reads DLTRRNIIRW…KWVDGSTWKH (105 aa). Residues 131–151 constitute an intramembrane region (helical); sequence LTLVGQAMGSMLLTIEALLRF. Residues 152 to 374 lie on the Cytoplasmic side of the membrane; sequence VPDIWLDTMG…FGINAMWNEH (223 aa). The segment at residues 375–395 is an intramembrane region (helical); the sequence is FGIAVVEYAAAGLISLVHASA. Over 396–505 the chain is Cytoplasmic; sequence GPLLDIIVPW…EHKTSRLGSN (110 aa).

Belongs to the glycosyltransferase group 1 family.

The protein resides in the endoplasmic reticulum membrane. It carries out the reaction an alpha-D-Man-(1-&gt;3)-[alpha-D-Man-(1-&gt;6)]-beta-D-Man-(1-&gt;4)-beta-D-GlcNAc-(1-&gt;4)-alpha-D-GlcNAc-diphospho-di-trans,poly-cis-dolichol + 2 GDP-alpha-D-mannose = an alpha-D-Man-(1-&gt;2)-alpha-D-Man-(1-&gt;2)-alpha-D-Man-(1-&gt;3)-[alpha-D-Man-(1-&gt;6)]-beta-D-Man-(1-&gt;4)-beta-D-GlcNAc-(1-&gt;4)-alpha-D-GlcNAc-diphospho-di-trans,poly-cis-dolichol + 2 GDP + 2 H(+). It functions in the pathway protein modification; protein glycosylation. Its function is as follows. GDP-Man:Man(3)GlcNAc(2)-PP-Dol alpha-1,2-mannosyltransferase that operates in the biosynthetic pathway of dolichol-linked oligosaccharides, the glycan precursors employed in protein asparagine (N)-glycosylation. The assembly of dolichol-linked oligosaccharides begins on the cytosolic side of the endoplasmic reticulum membrane and finishes in its lumen. The sequential addition of sugars to dolichol pyrophosphate produces dolichol-linked oligosaccharides containing fourteen sugars, including two GlcNAcs, nine mannoses and three glucoses. Once assembled, the oligosaccharide is transferred from the lipid to nascent proteins by oligosaccharyltransferases. Catalyzes, on the cytoplasmic face of the endoplasmic reticulum, the addition of the fourth and fifth mannose residues to the dolichol-linked oligosaccharide chain, to produce Man(5)GlcNAc(2)-PP-dolichol core oligosaccharide. This is GDP-Man:Man(3)GlcNAc(2)-PP-Dol alpha-1,2-mannosyltransferase (ALG11) from Candida glabrata (strain ATCC 2001 / BCRC 20586 / JCM 3761 / NBRC 0622 / NRRL Y-65 / CBS 138) (Yeast).